Consider the following 179-residue polypeptide: Lipoprotein signal peptidase (179 aa).

4 helical membrane passes run 10 to 30, 48 to 68, 75 to 95, and 101 to 121; these read LFQF…AIII, VPVL…AFSF, WQHY…IFWL, and NAMI…GNLI. Active-site residues include D131 and D149. A helical membrane pass occupies residues 141-161; it reads HFPAFNIADSAITIGTILLLI.

The protein belongs to the peptidase A8 family.

The protein localises to the cell inner membrane. The catalysed reaction is Release of signal peptides from bacterial membrane prolipoproteins. Hydrolyzes -Xaa-Yaa-Zaa-|-(S,diacylglyceryl)Cys-, in which Xaa is hydrophobic (preferably Leu), and Yaa (Ala or Ser) and Zaa (Gly or Ala) have small, neutral side chains.. The protein operates within protein modification; lipoprotein biosynthesis (signal peptide cleavage). Functionally, this protein specifically catalyzes the removal of signal peptides from prolipoproteins. The polypeptide is Lipoprotein signal peptidase (Acinetobacter baylyi (strain ATCC 33305 / BD413 / ADP1)).